The chain runs to 365 residues: Peptide chain release factor 2 (365 aa).

Gln-252 is modified (N5-methylglutamine).

The protein belongs to the prokaryotic/mitochondrial release factor family. Post-translationally, methylated by PrmC. Methylation increases the termination efficiency of RF2.

It localises to the cytoplasm. In terms of biological role, peptide chain release factor 2 directs the termination of translation in response to the peptide chain termination codons UGA and UAA. This Shewanella woodyi (strain ATCC 51908 / MS32) protein is Peptide chain release factor 2.